We begin with the raw amino-acid sequence, 72 residues long: Prokaryotic ubiquitin-like protein Pup (72 aa).

The segment covering 1–10 (MATRDSGGGQ) has biased composition (gly residues). The interval 1–41 (MATRDSGGGQQHTNRHADEVEEVAAEGNDASDLKERHEKLS) is disordered. Residues 21–61 (EEVAAEGNDASDLKERHEKLSEDVDSLLDEIDDVLEENAEE) are a coiled coil. An ARC ATPase binding region spans residues 28 to 66 (NDASDLKERHEKLSEDVDSLLDEIDDVLEENAEEFVKGY). Over residues 31-41 (SDLKERHEKLS) the composition is skewed to basic and acidic residues. Residue glutamate 72 forms an Isoglutamyl lysine isopeptide (Glu-Lys) (interchain with K-? in acceptor proteins) linkage.

Belongs to the prokaryotic ubiquitin-like protein family. Strongly interacts with the proteasome-associated ATPase ARC through a hydrophobic interface; the interacting region of Pup lies in its C-terminal half. There is one Pup binding site per ARC hexamer ring.

It functions in the pathway protein degradation; proteasomal Pup-dependent pathway. In terms of biological role, protein modifier that is covalently attached to lysine residues of substrate proteins, thereby targeting them for proteasomal degradation. The tagging system is termed pupylation. The chain is Prokaryotic ubiquitin-like protein Pup from Frankia alni (strain DSM 45986 / CECT 9034 / ACN14a).